The following is a 446-amino-acid chain: Choline monooxygenase, chloroplastic (446 aa).

The transit peptide at 1-65 (MAASATTMLL…NTSTNKIITK (65 aa)) directs the protein to the chloroplast. Residues 127-234 (WQVAGYSEQV…VAEWGPFILI (108 aa)) enclose the Rieske domain. [2Fe-2S] cluster-binding residues include Cys-169, His-171, Cys-188, and His-191. 2 residues coordinate Fe cation: His-294 and His-299.

The protein belongs to the choline monooxygenase family. Requires [2Fe-2S] cluster as cofactor. It depends on Fe cation as a cofactor. The cofactor is Mg(2+). Expressed in roots and leaves.

It localises to the plastid. It is found in the chloroplast stroma. It catalyses the reaction choline + 2 reduced [2Fe-2S]-[ferredoxin] + O2 + 2 H(+) = betaine aldehyde hydrate + 2 oxidized [2Fe-2S]-[ferredoxin] + H2O. The protein operates within amine and polyamine biosynthesis; betaine biosynthesis via choline pathway; betaine aldehyde from choline (monooxygenase route): step 1/1. Its function is as follows. Catalyzes the first step of the osmoprotectant glycine betaine synthesis. This Beta vulgaris (Sugar beet) protein is Choline monooxygenase, chloroplastic (CMO).